A 476-amino-acid chain; its full sequence is Probable cytosolic Fe-S cluster assembly factor GH10760 (476 aa).

8 residues coordinate [4Fe-4S] cluster: cysteine 23, cysteine 68, cysteine 71, cysteine 74, cysteine 187, cysteine 243, cysteine 395, and cysteine 399.

Belongs to the NARF family.

Its function is as follows. Component of the cytosolic iron-sulfur (Fe/S) protein assembly machinery. Required for maturation of extramitochondrial Fe/S proteins. The chain is Probable cytosolic Fe-S cluster assembly factor GH10760 from Drosophila grimshawi (Hawaiian fruit fly).